The following is a 249-amino-acid chain: Diaminopimelate epimerase (249 aa).

N11 and N60 together coordinate substrate. The Proton donor role is filled by C69. Substrate-binding positions include 70–71, N164, and 182–183; these read GN and ER. C192 acts as the Proton acceptor in catalysis. 193-194 contacts substrate; the sequence is GT.

The protein belongs to the diaminopimelate epimerase family. In terms of assembly, homodimer.

Its subcellular location is the cytoplasm. The catalysed reaction is (2S,6S)-2,6-diaminopimelate = meso-2,6-diaminopimelate. The protein operates within amino-acid biosynthesis; L-lysine biosynthesis via DAP pathway; DL-2,6-diaminopimelate from LL-2,6-diaminopimelate: step 1/1. Its function is as follows. Catalyzes the stereoinversion of LL-2,6-diaminopimelate (L,L-DAP) to meso-diaminopimelate (meso-DAP), a precursor of L-lysine and an essential component of the bacterial peptidoglycan. The sequence is that of Diaminopimelate epimerase from Campylobacter jejuni (strain RM1221).